A 580-amino-acid polypeptide reads, in one-letter code: Tyrosyl-DNA phosphodiesterase 1 (580 aa).

Residues 65 to 117 (ATNKEQEAHSSSSKPAVTAPVASGSSSSGSLDTNPSGSSASGPAASQDTSNLA) are disordered. Residues 87–110 (SGSSSSGSLDTNPSGSSASGPAAS) are compositionally biased toward low complexity. His-248 acts as the Nucleophile in catalysis. Lys-250 contributes to the substrate binding site. An interaction with DNA region spans residues 387–390 (SIGS). His-479 functions as the Proton donor/acceptor in the catalytic mechanism. A substrate-binding site is contributed by Lys-481.

Belongs to the tyrosyl-DNA phosphodiesterase family. Expressed in the body and at higher levels in the head. Expressed in the delaminating neuroblasts and a few ganglion mother cells in stage 11-14 embryonic central nervous system. Weak expression is seen in gonads at stage 16. Expressed in the brain; expression is regulated by DIP2.

The protein localises to the nucleus. Its subcellular location is the cytoplasm. Functionally, DNA repair enzyme that can remove a variety of covalent adducts from DNA through hydrolysis of a 3'-phosphodiester bond, giving rise to DNA with a free 3' phosphate. Catalyzes the hydrolysis of dead-end complexes between DNA and the topoisomerase I active site tyrosine residue. Hydrolyzes 3'-phosphoglycolates on protruding 3' ends on DNA double-strand breaks due to DNA damage by radiation and free radicals. Acts on blunt-ended double-strand DNA breaks and on single-stranded DNA. May have low 3'exonuclease activity and may be able to remove a single nucleoside from the 3'end of DNA and RNA molecules with 3'hydroxyl groups. Has no exonuclease activity towards DNA or RNA with a 3'phosphate. Required for normal polarization of epidermal cells, correct subcellular location of the Crb complex to the apical lateral membrane, and for normal neuronal development during embryonic development. Contributes to maintenance of epithelial cells in response to topoisomerase-1-mediated and oxidative DNA damage. Required for precise axonal bifurcation in mushroom body neurons. Required for maintenance of normal neuronal function. This chain is Tyrosyl-DNA phosphodiesterase 1, found in Drosophila melanogaster (Fruit fly).